Reading from the N-terminus, the 220-residue chain is RNA-free ribonuclease P (220 aa).

This sequence belongs to the HARP family.

The enzyme catalyses Endonucleolytic cleavage of RNA, removing 5'-extranucleotides from tRNA precursor.. In terms of biological role, RNA-free RNase P that catalyzes the removal of the 5'-leader sequence from pre-tRNA to produce the mature 5'-terminus. This Methanothermobacter thermautotrophicus (strain ATCC 29096 / DSM 1053 / JCM 10044 / NBRC 100330 / Delta H) (Methanobacterium thermoautotrophicum) protein is RNA-free ribonuclease P.